The chain runs to 241 residues: Uridylate kinase (241 aa).

12–15 (KLSG) lines the ATP pocket. The interval 20-25 (GDKGTG) is involved in allosteric activation by GTP. Glycine 54 lines the UMP pocket. ATP is bound by residues glycine 55 and arginine 59. Residues aspartate 74 and 135–142 (TGSPYFST) each bind UMP. ATP is bound by residues asparagine 163, tyrosine 169, and aspartate 172.

This sequence belongs to the UMP kinase family. In terms of assembly, homohexamer.

The protein resides in the cytoplasm. It carries out the reaction UMP + ATP = UDP + ADP. It participates in pyrimidine metabolism; CTP biosynthesis via de novo pathway; UDP from UMP (UMPK route): step 1/1. With respect to regulation, allosterically activated by GTP. Inhibited by UTP. Catalyzes the reversible phosphorylation of UMP to UDP. The protein is Uridylate kinase of Pediococcus pentosaceus (strain ATCC 25745 / CCUG 21536 / LMG 10740 / 183-1w).